Consider the following 334-residue polypeptide: Dual specificity mitogen-activated protein kinase kinase 6 (334 aa).

Positions 1 to 11 are enriched in basic residues; sequence MSQSKGKKRNP. The segment at 1-34 is disordered; it reads MSQSKGKKRNPGLKIPKEAFEQPQTSSTPPRDLD. Residues 4 to 19 are d domain; the sequence is SKGKKRNPGLKIPKEA. The 262-residue stretch at 53–314 folds into the Protein kinase domain; that stretch reads LEPIMELGRG…YPELMQHPFF (262 aa). Residues 59-67 and Lys82 contribute to the ATP site; that span reads LGRGAYGVV. Asp179 (proton acceptor) is an active-site residue. Ser207 bears the (Microbial infection) O-acetylserine; by Yersinia YopJ; alternate mark. Position 207 is a phosphoserine; by MAP3K; alternate (Ser207). Thr211 is modified ((Microbial infection) O-acetylthreonine; by Yersinia YopJ; alternate). At Thr211 the chain carries Phosphothreonine; by MAP3K; alternate. A DVD domain region spans residues 311 to 334; that stretch reads HPFFTLHESKGTDVASFVKLILGD.

It belongs to the protein kinase superfamily. STE Ser/Thr protein kinase family. MAP kinase kinase subfamily. In terms of assembly, dimer. Interacts (via its D domain) with its substrates MAPK11, MAPK12, MAPK13 and MAPK14. Interacts (via its DVD domain) with MAP3Ks activators like MAP3K5/ASK1, MAP3K1/MEKK1, MAP3K2/MEKK2, MAP3K3/MEKK3, MAP3K4/MEKK4, MAP3K7/TAK1, MAP3K11/MLK3 and MAP3K17/TAOK2. Interacts with DCTN1. Interacts with EIF2AK2/PKR. (Microbial infection) Interacts with Yersinia YopJ. In terms of processing, weakly autophosphorylated. Phosphorylated at Ser-207 and Thr-211 by the majority of M3Ks, such as MAP3K5/ASK1, MAP3K1/MEKK1, MAP3K2/MEKK2, MAP3K3/MEKK3, MAP3K4/MEKK4, MAP3K7/TAK1, MAP3K11/MLK3 and MAP3K17/TAOK2. Post-translationally, in response to genotoxic stress, MAP3K-phosphorylated MAP2K6 is ubiquitinated and degraded by the SCF(FBXO31) complex. (Microbial infection) Acetylation of Ser-207 and Thr-211 by Yersinia YopJ prevents phosphorylation and activation, thus blocking the MAPK signaling pathway. In terms of tissue distribution, isoform 2 is only expressed in skeletal muscle. Isoform 1 is expressed in skeletal muscle, heart, and in lesser extent in liver or pancreas.

The protein localises to the nucleus. Its subcellular location is the cytoplasm. The protein resides in the cytoskeleton. It carries out the reaction L-seryl-[protein] + ATP = O-phospho-L-seryl-[protein] + ADP + H(+). The catalysed reaction is L-threonyl-[protein] + ATP = O-phospho-L-threonyl-[protein] + ADP + H(+). It catalyses the reaction L-tyrosyl-[protein] + ATP = O-phospho-L-tyrosyl-[protein] + ADP + H(+). Its activity is regulated as follows. Activated by dual phosphorylation on Ser-207 and Thr-211 in response to a variety of cellular stresses, including UV radiation, osmotic shock, hypoxia, inflammatory cytokines, interferon gamma (IFNG), and less often by growth factors. MAP2K6/MKK6 is activated by the majority of M3Ks, such as MAP3K5/ASK1, MAP3K1/MEKK1, MAP3K2/MEKK2, MAP3K3/MEKK3, MAP3K4/MEKK4, MAP3K7/TAK1, MAP3K11/MLK3 and MAP3K17/TAOK2. Dual specificity protein kinase which acts as an essential component of the MAP kinase signal transduction pathway. With MAP3K3/MKK3, catalyzes the concomitant phosphorylation of a threonine and a tyrosine residue in the MAP kinases p38 MAPK11, MAPK12, MAPK13 and MAPK14 and plays an important role in the regulation of cellular responses to cytokines and all kinds of stresses. Especially, MAP2K3/MKK3 and MAP2K6/MKK6 are both essential for the activation of MAPK11 and MAPK13 induced by environmental stress, whereas MAP2K6/MKK6 is the major MAPK11 activator in response to TNF. MAP2K6/MKK6 also phosphorylates and activates PAK6. The p38 MAP kinase signal transduction pathway leads to direct activation of transcription factors. Nuclear targets of p38 MAP kinase include the transcription factors ATF2 and ELK1. Within the p38 MAPK signal transduction pathway, MAP3K6/MKK6 mediates phosphorylation of STAT4 through MAPK14 activation, and is therefore required for STAT4 activation and STAT4-regulated gene expression in response to IL-12 stimulation. The pathway is also crucial for IL-6-induced SOCS3 expression and down-regulation of IL-6-mediated gene induction; and for IFNG-dependent gene transcription. Has a role in osteoclast differentiation through NF-kappa-B transactivation by TNFSF11, and in endochondral ossification and since SOX9 is another likely downstream target of the p38 MAPK pathway. MAP2K6/MKK6 mediates apoptotic cell death in thymocytes. Acts also as a regulator for melanocytes dendricity, through the modulation of Rho family GTPases. The chain is Dual specificity mitogen-activated protein kinase kinase 6 (MAP2K6) from Homo sapiens (Human).